The primary structure comprises 357 residues: MNTMKRMDCRDLNQSELTQHCAELGLPKFRGRQVFQWVQQKAVQNWEELRNIGAGDRQKLQEGLFLQPLRKVREQIAQDGTRKFLFRCADGETLECVLMDYDRRKNRDRHTVCVSTQIGCAVGCAFCATGLGGWRRNLSPGEILGQVLDITYLMRQEDPDFQVTNIVFMGMGEPLLNYEAVLKAIELLNDPEGQGIGMRRMTISTSGVAPKIRQLAKDNPQVGLAVSLHSAHNTTRDQLIPMNRKYPLEELMEACGDYTTLTNRRITFEIALISGQATLEAAQAVGHLLKGQLAHVNLIPVNPVAGTGMARPTAKEVQQFAQSLESMGIPVSVREEKGTDIDAACGQLRRQLECEQK.

The active-site Proton acceptor is the Glu95. The region spanning 106–340 is the Radical SAM core domain; sequence NRDRHTVCVS…VSVREEKGTD (235 aa). Cys113 and Cys345 are joined by a disulfide. [4Fe-4S] cluster-binding residues include Cys120, Cys124, and Cys127. Residues 172–173, Ser204, 227–229, and Asn302 contribute to the S-adenosyl-L-methionine site; these read GE and SLH. Cys345 (S-methylcysteine intermediate) is an active-site residue.

It belongs to the radical SAM superfamily. RlmN family. The cofactor is [4Fe-4S] cluster.

It is found in the cytoplasm. The catalysed reaction is adenosine(2503) in 23S rRNA + 2 reduced [2Fe-2S]-[ferredoxin] + 2 S-adenosyl-L-methionine = 2-methyladenosine(2503) in 23S rRNA + 5'-deoxyadenosine + L-methionine + 2 oxidized [2Fe-2S]-[ferredoxin] + S-adenosyl-L-homocysteine. The enzyme catalyses adenosine(37) in tRNA + 2 reduced [2Fe-2S]-[ferredoxin] + 2 S-adenosyl-L-methionine = 2-methyladenosine(37) in tRNA + 5'-deoxyadenosine + L-methionine + 2 oxidized [2Fe-2S]-[ferredoxin] + S-adenosyl-L-homocysteine. In terms of biological role, specifically methylates position 2 of adenine 2503 in 23S rRNA and position 2 of adenine 37 in tRNAs. The polypeptide is Probable dual-specificity RNA methyltransferase RlmN (Desulfitobacterium hafniense (strain DSM 10664 / DCB-2)).